Consider the following 135-residue polypeptide: Interleukin-4 (135 aa).

The first 24 residues, 1–24 (MGLTSQLIPVLVCLLACTSHFVHG), serve as a signal peptide directing secretion. Intrachain disulfides connect Cys-27–Cys-135, Cys-48–Cys-85, and Cys-70–Cys-105. N-linked (GlcNAc...) asparagine glycans are attached at residues Asn-62 and Asn-96.

The protein belongs to the IL-4/IL-13 family.

It is found in the secreted. Functionally, participates in at least several B-cell activation processes as well as of other cell types. It is a costimulator of DNA-synthesis. It induces the expression of class II MHC molecules on resting B-cells. It enhances both secretion and cell surface expression of IgE and IgG1. It also regulates the expression of the low affinity Fc receptor for IgE (CD23) on both lymphocytes and monocytes. Positively regulates IL31RA expression in macrophages. Stimulates autophagy in dendritic cells by interfering with mTORC1 signaling and through the induction of RUFY4. The chain is Interleukin-4 (IL4) from Cervus elaphus (Red deer).